Here is a 485-residue protein sequence, read N- to C-terminus: Pre-glycoprotein polyprotein GP complex (485 aa).

A lipid anchor (N-myristoyl glycine; by host) is attached at Gly-2. The Extracellular portion of the chain corresponds to 2–17; the sequence is GQLISFFGEIPTILQE. A helical transmembrane segment spans residues 18 to 33; the sequence is ALNIALIAVSIIATIK. At 34-58 the chain is on the cytoplasmic side; it reads GVVNVWKSGLIQLLMFVMLAGRSCS. A Zn(2+)-binding site is contributed by Cys-57. Over 59-424 the chain is Extracellular; sequence VQIGHHLELE…QGRTPLSLVD (366 aa). Intrachain disulfides connect Cys-85–Cys-225, Cys-271–Cys-284, Cys-293–Cys-302, and Cys-356–Cys-377. Asn-88, Asn-128, Asn-179, and Asn-218 each carry an N-linked (GlcNAc...) asparagine; by host glycan. N-linked (GlcNAc...) asparagine; by host glycosylation is found at Asn-357, Asn-365, Asn-382, and Asn-387. A helical transmembrane segment spans residues 425-445; sequence VCFWSTLFYTASIFLHLIRIP. The Cytoplasmic segment spans residues 446 to 485; it reads THRHIVGEGCPKPHRLRADSTCACGLYKQKRRPLKWVRSN. Zn(2+) contacts are provided by His-447, His-449, Cys-455, His-459, Cys-467, and Cys-469.

Belongs to the arenaviridae GPC protein family. Interacts with glycoprotein G2. Part of the GP complex (GP-C) together with glycoprotein G1 and glycoprotein G2. The GP-complex interacts with protein Z, which interacts with ribonucleocapsid; these interactions may induce virion budding. In terms of assembly, homotrimer; disulfide-linked. In pre-fusion state, G1 homotrimers bind G2 homotrimers via ionic interactions. Part of the GP complex (GP-C) together with glycoprotein G2 and the stable signal peptide. The GP-complex interacts with protein Z, which interacts with ribonucleocapsid; these interactions may induce virion budding. As to quaternary structure, homotrimer. Interacts with the stable signal peptide. In pre-fusion state, G2 homotrimers bind G1 homotrimers via ionic interactions. Part of the GP complex (GP-C) together with glycoprotein G1 and the stable signal peptide. Acidification in the endosome triggers rearrangements, which ultimately leads to a 6 helix bundle formed by the two heptad repeat domains (HR1 and HR2) in post-fusion state. The GP-complex interacts with protein Z, which interacts with ribonucleocapsid; these interactions may induce virion budding. Post-translationally, specific enzymatic cleavages in vivo yield mature proteins. GP-C polyprotein is cleaved in the endoplasmic reticulum by the host protease MBTPS1. Only cleaved glycoprotein is incorporated into virions. The SSP remains stably associated with the GP complex following cleavage by signal peptidase and plays crucial roles in the trafficking of GP through the secretory pathway. In terms of processing, myristoylation is necessary for GP2-mediated fusion activity.

The protein localises to the virion membrane. Its subcellular location is the host endoplasmic reticulum membrane. The protein resides in the host Golgi apparatus membrane. It is found in the host cell membrane. Functions as a cleaved signal peptide that is retained as the third component of the GP complex (GP-C). Helps to stabilize the spike complex in its native conformation. The SSP is required for efficient glycoprotein expression, post-translational maturation cleavage of G1 and G2, glycoprotein transport to the cell surface plasma membrane, formation of infectious virus particles, and acid pH-dependent glycoprotein-mediated cell fusion. Functionally, forms the virion spikes together with glycoprotein G2. The glycoprotein spike trimers are connected to the underlying matrix. Interacts with the host receptor leading to virus endocytosis. Its function is as follows. Forms the virion spikes together with glycoprotein G1. The glycoprotein spike trimers are connected to the underlying matrix. Class I viral fusion protein that directs fusion of viral and host endosomal membranes, leading to delivery of the nucleocapsid into the cytoplasm. Membrane fusion is mediated by irreversible conformational changes induced by acidification. This is Pre-glycoprotein polyprotein GP complex from Sigmodon hispidus (Hispid cotton rat).